The following is a 182-amino-acid chain: Vomeronasal secretory protein 1 (182 aa).

The N-terminal stretch at 1–18 (MRALLLIISFCLVAVLQA) is a signal peptide. N30 carries an N-linked (GlcNAc...) asparagine glycan. C76 and C168 form a disulfide bridge.

This sequence belongs to the calycin superfamily. Lipocalin family. In terms of tissue distribution, specifically expressed in vomeronasal and posterior glands of the nasal septum, the ducts of which open into the lumen of the vomeronasal organ.

Its subcellular location is the secreted. Transport of lipophilic molecules, possible pheromone-carrier. The chain is Vomeronasal secretory protein 1 (Lcn3) from Mus musculus (Mouse).